A 78-amino-acid chain; its full sequence is Small ribosomal subunit protein eS21 (78 aa).

It belongs to the eukaryotic ribosomal protein eS21 family.

The sequence is that of Small ribosomal subunit protein eS21 (rps21) from Dictyostelium discoideum (Social amoeba).